A 245-amino-acid chain; its full sequence is Enolase-phosphatase E1 (245 aa).

This sequence belongs to the HAD-like hydrolase superfamily. MasA/MtnC family. In terms of assembly, monomer. Mg(2+) serves as cofactor.

The catalysed reaction is 5-methylsulfanyl-2,3-dioxopentyl phosphate + H2O = 1,2-dihydroxy-5-(methylsulfanyl)pent-1-en-3-one + phosphate. The protein operates within amino-acid biosynthesis; L-methionine biosynthesis via salvage pathway; L-methionine from S-methyl-5-thio-alpha-D-ribose 1-phosphate: step 3/6. It functions in the pathway amino-acid biosynthesis; L-methionine biosynthesis via salvage pathway; L-methionine from S-methyl-5-thio-alpha-D-ribose 1-phosphate: step 4/6. In terms of biological role, bifunctional enzyme that catalyzes the enolization of 2,3-diketo-5-methylthiopentyl-1-phosphate (DK-MTP-1-P) into the intermediate 2-hydroxy-3-keto-5-methylthiopentenyl-1-phosphate (HK-MTPenyl-1-P), which is then dephosphorylated to form the acireductone 1,2-dihydroxy-3-keto-5-methylthiopentene (DHK-MTPene). In Prochlorococcus marinus (strain MIT 9313), this protein is Enolase-phosphatase E1.